The following is a 490-amino-acid chain: Glucose-6-phosphate 1-dehydrogenase (490 aa).

NADP(+)-binding positions include Arg-49, 91-92, and Lys-146; that span reads DV. Positions 176, 180, 214, and 233 each coordinate substrate. His-238 serves as the catalytic Proton acceptor. Lys-338 and Lys-343 together coordinate substrate.

Belongs to the glucose-6-phosphate dehydrogenase family.

It catalyses the reaction D-glucose 6-phosphate + NADP(+) = 6-phospho-D-glucono-1,5-lactone + NADPH + H(+). It functions in the pathway carbohydrate degradation; pentose phosphate pathway; D-ribulose 5-phosphate from D-glucose 6-phosphate (oxidative stage): step 1/3. In terms of biological role, catalyzes the oxidation of glucose 6-phosphate to 6-phosphogluconolactone. The sequence is that of Glucose-6-phosphate 1-dehydrogenase from Buchnera aphidicola subsp. Schizaphis graminum (strain Sg).